Here is a 355-residue protein sequence, read N- to C-terminus: Protein RecA (355 aa).

ATP is bound at residue 67-74 (GPESSGKT).

Belongs to the RecA family.

The protein localises to the cytoplasm. In terms of biological role, can catalyze the hydrolysis of ATP in the presence of single-stranded DNA, the ATP-dependent uptake of single-stranded DNA by duplex DNA, and the ATP-dependent hybridization of homologous single-stranded DNAs. It interacts with LexA causing its activation and leading to its autocatalytic cleavage. The polypeptide is Protein RecA (Shewanella baltica (strain OS195)).